The primary structure comprises 1149 residues: DNA-directed RNA polymerase III subunit RPC2 (1149 aa).

Residues Cys-1095, Cys-1098, Cys-1107, and Cys-1110 each contribute to the Zn(2+) site. The segment at 1095–1110 (CDKCGLMGYSGWCTTC) adopts a C4-type zinc-finger fold.

Belongs to the RNA polymerase beta chain family. Component of the RNA polymerase III (Pol III) complex consisting of 17 subunits.

It is found in the nucleus. The enzyme catalyses RNA(n) + a ribonucleoside 5'-triphosphate = RNA(n+1) + diphosphate. In terms of biological role, DNA-dependent RNA polymerase catalyzes the transcription of DNA into RNA using the four ribonucleoside triphosphates as substrates. Second largest core component of RNA polymerase III which synthesizes small RNAs, such as 5S rRNA and tRNAs. Proposed to contribute to the polymerase catalytic activity and forms the polymerase active center together with the largest subunit. Pol III is composed of mobile elements and RPC2 is part of the core element with the central large cleft and probably a clamp element that moves to open and close the cleft. In Saccharomyces cerevisiae (strain ATCC 204508 / S288c) (Baker's yeast), this protein is DNA-directed RNA polymerase III subunit RPC2 (RET1).